Here is a 460-residue protein sequence, read N- to C-terminus: Argininosuccinate lyase (460 aa).

It belongs to the lyase 1 family. Argininosuccinate lyase subfamily.

The protein localises to the cytoplasm. It catalyses the reaction 2-(N(omega)-L-arginino)succinate = fumarate + L-arginine. It functions in the pathway amino-acid biosynthesis; L-arginine biosynthesis; L-arginine from L-ornithine and carbamoyl phosphate: step 3/3. The protein is Argininosuccinate lyase of Prosthecochloris aestuarii (strain DSM 271 / SK 413).